Here is a 140-residue protein sequence, read N- to C-terminus: TPT1-like protein (140 aa).

The TCTP domain occupies methionine 6–threonine 140.

This sequence belongs to the TCTP family.

The chain is TPT1-like protein from Homo sapiens (Human).